A 403-amino-acid chain; its full sequence is Sulfate adenylyltransferase (403 aa).

Belongs to the sulfate adenylyltransferase family.

It catalyses the reaction sulfate + ATP + H(+) = adenosine 5'-phosphosulfate + diphosphate. It functions in the pathway sulfur metabolism; hydrogen sulfide biosynthesis; sulfite from sulfate: step 1/3. This Pelodictyon phaeoclathratiforme (strain DSM 5477 / BU-1) protein is Sulfate adenylyltransferase.